A 124-amino-acid polypeptide reads, in one-letter code: Large ribosomal subunit protein bL12 (124 aa).

The span at alanine 101–glutamate 115 shows a compositional bias: basic and acidic residues. The interval alanine 101–lysine 124 is disordered.

It belongs to the bacterial ribosomal protein bL12 family. As to quaternary structure, homodimer. Part of the ribosomal stalk of the 50S ribosomal subunit. Forms a multimeric L10(L12)X complex, where L10 forms an elongated spine to which 2 to 4 L12 dimers bind in a sequential fashion. Binds GTP-bound translation factors.

In terms of biological role, forms part of the ribosomal stalk which helps the ribosome interact with GTP-bound translation factors. Is thus essential for accurate translation. This is Large ribosomal subunit protein bL12 from Hahella chejuensis (strain KCTC 2396).